We begin with the raw amino-acid sequence, 297 residues long: Protoheme IX farnesyltransferase (297 aa).

9 helical membrane passes run 26 to 46, 48 to 68, 96 to 116, 120 to 140, 147 to 167, 174 to 194, 218 to 238, 243 to 263, and 276 to 296; these read VTQLAVFCAVIGMFLATPGMV, YPVLFGGIAGIWLLAGAAFAV, FHIIIFSIILGSLGMIILWNF, LTMWLTLATFVGYAVIYTWLL, NIVIGGLSGAMPPALGWAAVT, AWLLVLIIFVWTPPHFWALAL, LLNILLYTLILIAATLLPYIY, IIYLISAIVLGLMFLAYVIAL, and FRFSITYLSLLFAALLIDHYF.

Belongs to the UbiA prenyltransferase family. Protoheme IX farnesyltransferase subfamily.

The protein resides in the cell membrane. The enzyme catalyses heme b + (2E,6E)-farnesyl diphosphate + H2O = Fe(II)-heme o + diphosphate. It functions in the pathway porphyrin-containing compound metabolism; heme O biosynthesis; heme O from protoheme: step 1/1. Its function is as follows. Converts heme B (protoheme IX) to heme O by substitution of the vinyl group on carbon 2 of heme B porphyrin ring with a hydroxyethyl farnesyl side group. This chain is Protoheme IX farnesyltransferase, found in Polynucleobacter asymbioticus (strain DSM 18221 / CIP 109841 / QLW-P1DMWA-1) (Polynucleobacter necessarius subsp. asymbioticus).